Consider the following 300-residue polypeptide: tRNA dimethylallyltransferase (300 aa).

ATP is bound at residue Gly11–Ser18. Thr13–Ser18 contacts substrate. The interaction with substrate tRNA stretch occupies residues Asp35 to Gln38.

It belongs to the IPP transferase family. As to quaternary structure, monomer. Mg(2+) is required as a cofactor.

The enzyme catalyses adenosine(37) in tRNA + dimethylallyl diphosphate = N(6)-dimethylallyladenosine(37) in tRNA + diphosphate. In terms of biological role, catalyzes the transfer of a dimethylallyl group onto the adenine at position 37 in tRNAs that read codons beginning with uridine, leading to the formation of N6-(dimethylallyl)adenosine (i(6)A). In Borrelia hermsii (strain HS1 / DAH), this protein is tRNA dimethylallyltransferase.